A 31-amino-acid polypeptide reads, in one-letter code: uncharacterized protein (31 aa).

This is an uncharacterized protein from Chlamydia phage 1 (Bacteriophage Chp1).